Consider the following 398-residue polypeptide: O-methyltransferase hmp5 (398 aa).

S-adenosyl-L-methionine is bound by residues 233–234 (GG), E261, and 283–284 (DF). H303 acts as the Proton acceptor in catalysis.

This sequence belongs to the class I-like SAM-binding methyltransferase superfamily. Cation-independent O-methyltransferase family.

Its pathway is secondary metabolite biosynthesis. O-methyltransferase; part of the gene cluster that mediates the biosynthesis of hypothemycin, a resorcylic acid lactone (RAL) that irreversibly inhibits a subset of protein kinases with a conserved cysteine in the ATP binding site such as human ERK2. The first step is performed by both PKSs hmp3 and hmp8 and leads to the production of 7',8'-dehydrozearalenol (DHZ). The highly reducing PKS hpm8 synthesizes the reduced hexaketide (7S,11S,2E,8E)-7,11-dihydroxy-dodeca-2,8-dienoate, which is transferred downstream to the non-reducing PKS hpm3. Hpm3 then extends the reduced hexaketide to a nonaketide, after which regioselective cyclization and macrolactonization affords DHZ. The next step is the conversion of DHZ into aigialomycin C and is performed by the O-methyltransferase hmp5, the FAD-binding monooxygenase hmp7, and the cytochrome P450 monooxygenase hmp1. The wide substrate tolerance of the hmp5 and hmp7 implies that the reactions from DHZ to aigialomycin C can occur in any order. The steps from aigialomycin C to hypothemycin are less well established. The FAD-linked oxidoreductase hmp9 presumably catalyzes oxidation of the C-6' hydroxyl to a ketone. The timing of this oxidation is important, since the resulting enone functional group is a Michael acceptor that can react spontaneously with glutathione, an abundant metabolite in fungal cells. The glutathione S-transferase hmp2 catalyzes cis-trans isomerization of the 7',8' double bond with equilibrium favoring the trans isomer. The hpm6-encoded transporter might preferentially pump hypothemycin out of the cell relative to the trans isomer aigialomycin A. The cis-to-trans isomerization may be coupled with C-4' hydroxylation, since all known hypothemycin analogs containing the enone functional group also have hydroxyl groups at both C-4' and C-5'. This Hypomyces subiculosus (Nectria subiculosa) protein is O-methyltransferase hmp5.